The primary structure comprises 157 residues: 6,7-dimethyl-8-ribityllumazine synthase (157 aa).

5-amino-6-(D-ribitylamino)uracil is bound by residues Phe25, 59–61, and 83–85; these read AME and AII. 88 to 89 provides a ligand contact to (2S)-2-hydroxy-3-oxobutyl phosphate; the sequence is ST. The active-site Proton donor is the His91. Phe116 serves as a coordination point for 5-amino-6-(D-ribitylamino)uracil. Residue Arg130 participates in (2S)-2-hydroxy-3-oxobutyl phosphate binding.

Belongs to the DMRL synthase family.

The catalysed reaction is (2S)-2-hydroxy-3-oxobutyl phosphate + 5-amino-6-(D-ribitylamino)uracil = 6,7-dimethyl-8-(1-D-ribityl)lumazine + phosphate + 2 H2O + H(+). It participates in cofactor biosynthesis; riboflavin biosynthesis; riboflavin from 2-hydroxy-3-oxobutyl phosphate and 5-amino-6-(D-ribitylamino)uracil: step 1/2. Its function is as follows. Catalyzes the formation of 6,7-dimethyl-8-ribityllumazine by condensation of 5-amino-6-(D-ribitylamino)uracil with 3,4-dihydroxy-2-butanone 4-phosphate. This is the penultimate step in the biosynthesis of riboflavin. The sequence is that of 6,7-dimethyl-8-ribityllumazine synthase from Lawsonia intracellularis (strain PHE/MN1-00).